The chain runs to 313 residues: Protein-methionine-sulfoxide reductase catalytic subunit MsrP (313 aa).

Positions 1 to 44 (MARWRPDTAEREATPEALYLRRREFLALGAAGAVGLLLPRGARA) form a signal peptide, tat-type signal. Residues N76, 79–80 (YE), C134, T169, N217, R222, and 233–235 (GAK) contribute to the Mo-molybdopterin site.

Belongs to the MsrP family. Heterodimer of a catalytic subunit (MsrP) and a heme-binding subunit (MsrQ). Mo-molybdopterin is required as a cofactor. Post-translationally, predicted to be exported by the Tat system. The position of the signal peptide cleavage has not been experimentally proven.

The protein resides in the periplasm. The enzyme catalyses L-methionyl-[protein] + a quinone + H2O = L-methionyl-(S)-S-oxide-[protein] + a quinol. The catalysed reaction is L-methionyl-[protein] + a quinone + H2O = L-methionyl-(R)-S-oxide-[protein] + a quinol. Functionally, part of the MsrPQ system that repairs oxidized periplasmic proteins containing methionine sulfoxide residues (Met-O), using respiratory chain electrons. Thus protects these proteins from oxidative-stress damage caused by reactive species of oxygen and chlorine generated by the host defense mechanisms. MsrPQ is essential for the maintenance of envelope integrity under bleach stress, rescuing a wide series of structurally unrelated periplasmic proteins from methionine oxidation. The catalytic subunit MsrP is non-stereospecific, being able to reduce both (R-) and (S-) diastereoisomers of methionine sulfoxide. This is Protein-methionine-sulfoxide reductase catalytic subunit MsrP from Anaeromyxobacter dehalogenans (strain 2CP-C).